The following is a 126-amino-acid chain: Holo-[acyl-carrier-protein] synthase (126 aa).

Mg(2+) contacts are provided by D9 and E58.

This sequence belongs to the P-Pant transferase superfamily. AcpS family. Mg(2+) is required as a cofactor.

Its subcellular location is the cytoplasm. The enzyme catalyses apo-[ACP] + CoA = holo-[ACP] + adenosine 3',5'-bisphosphate + H(+). In terms of biological role, transfers the 4'-phosphopantetheine moiety from coenzyme A to a Ser of acyl-carrier-protein. This is Holo-[acyl-carrier-protein] synthase from Pectobacterium carotovorum subsp. carotovorum (strain PC1).